Reading from the N-terminus, the 290-residue chain is 4-hydroxybenzoate octaprenyltransferase (290 aa).

9 helical membrane passes run 23–43, 46–66, 96–116, 118–138, 141–161, 169–189, 212–232, 235–255, and 265–285; these read IGTE…SDGY, LKMF…GCAI, AIWV…FLPI, TFYW…MKRY, LPQV…YTAT, CWLL…QYAI, IPII…ALYI, LLFP…IYQW, and LCFW…LAIL.

Belongs to the UbiA prenyltransferase family. Requires Mg(2+) as cofactor.

Its subcellular location is the cell inner membrane. It catalyses the reaction all-trans-octaprenyl diphosphate + 4-hydroxybenzoate = 4-hydroxy-3-(all-trans-octaprenyl)benzoate + diphosphate. It functions in the pathway cofactor biosynthesis; ubiquinone biosynthesis. Functionally, catalyzes the prenylation of para-hydroxybenzoate (PHB) with an all-trans polyprenyl group. Mediates the second step in the final reaction sequence of ubiquinone-8 (UQ-8) biosynthesis, which is the condensation of the polyisoprenoid side chain with PHB, generating the first membrane-bound Q intermediate 3-octaprenyl-4-hydroxybenzoate. This is 4-hydroxybenzoate octaprenyltransferase from Acinetobacter baylyi (strain ATCC 33305 / BD413 / ADP1).